Reading from the N-terminus, the 191-residue chain is Fe/S biogenesis protein NfuA (191 aa).

[4Fe-4S] cluster contacts are provided by Cys149 and Cys152.

It belongs to the NfuA family. As to quaternary structure, homodimer. Requires [4Fe-4S] cluster as cofactor.

Functionally, involved in iron-sulfur cluster biogenesis. Binds a 4Fe-4S cluster, can transfer this cluster to apoproteins, and thereby intervenes in the maturation of Fe/S proteins. Could also act as a scaffold/chaperone for damaged Fe/S proteins. This is Fe/S biogenesis protein NfuA from Hamiltonella defensa subsp. Acyrthosiphon pisum (strain 5AT).